A 537-amino-acid chain; its full sequence is CTP synthase (537 aa).

An amidoligase domain region spans residues 1 to 268; it reads MSTKYIFVTG…DQIVCDHLKL (268 aa). Ser14 lines the CTP pocket. Residue Ser14 participates in UTP binding. Residue 15 to 20 coordinates ATP; it reads SIGKGI. Tyr55 serves as a coordination point for L-glutamine. Position 72 (Asp72) interacts with ATP. 2 residues coordinate Mg(2+): Asp72 and Glu142. Residues 149–151, 189–194, and Lys225 each bind CTP; these read DIE and KTKPTQ. UTP contacts are provided by residues 189-194 and Lys225; that span reads KTKPTQ. Positions 293–536 constitute a Glutamine amidotransferase type-1 domain; sequence RIALVGKYVE…VTAAVEKSSD (244 aa). An L-glutamine-binding site is contributed by Gly355. Residue Cys382 is the Nucleophile; for glutamine hydrolysis of the active site. Residues 383–386, Glu406, and Arg464 each bind L-glutamine; that span reads LGMQ. Active-site residues include His509 and Glu511.

It belongs to the CTP synthase family. In terms of assembly, homotetramer.

It carries out the reaction UTP + L-glutamine + ATP + H2O = CTP + L-glutamate + ADP + phosphate + 2 H(+). It catalyses the reaction L-glutamine + H2O = L-glutamate + NH4(+). The catalysed reaction is UTP + NH4(+) + ATP = CTP + ADP + phosphate + 2 H(+). The protein operates within pyrimidine metabolism; CTP biosynthesis via de novo pathway; CTP from UDP: step 2/2. Its activity is regulated as follows. Allosterically activated by GTP, when glutamine is the substrate; GTP has no effect on the reaction when ammonia is the substrate. The allosteric effector GTP functions by stabilizing the protein conformation that binds the tetrahedral intermediate(s) formed during glutamine hydrolysis. Inhibited by the product CTP, via allosteric rather than competitive inhibition. Catalyzes the ATP-dependent amination of UTP to CTP with either L-glutamine or ammonia as the source of nitrogen. Regulates intracellular CTP levels through interactions with the four ribonucleotide triphosphates. This is CTP synthase from Streptococcus sanguinis (strain SK36).